Here is a 218-residue protein sequence, read N- to C-terminus: Adenylate kinase (218 aa).

G10–T15 is an ATP binding site. The segment at S30–V59 is NMP. AMP is bound by residues T31, R36, G57–V59, G85–R88, and Q92. Positions G122–D159 are LID. Residues R123 and T132–Y133 each bind ATP. 2 residues coordinate AMP: R156 and R167. ATP is bound at residue G203.

It belongs to the adenylate kinase family. Monomer.

Its subcellular location is the cytoplasm. It catalyses the reaction AMP + ATP = 2 ADP. It functions in the pathway purine metabolism; AMP biosynthesis via salvage pathway; AMP from ADP: step 1/1. Functionally, catalyzes the reversible transfer of the terminal phosphate group between ATP and AMP. Plays an important role in cellular energy homeostasis and in adenine nucleotide metabolism. The sequence is that of Adenylate kinase from Chlorobaculum tepidum (strain ATCC 49652 / DSM 12025 / NBRC 103806 / TLS) (Chlorobium tepidum).